We begin with the raw amino-acid sequence, 394 residues long: Elongation factor Tu 2 (394 aa).

Positions 10 to 204 constitute a tr-type G domain; it reads KPHVNVGTIG…YLDSYIPEPE (195 aa). Positions 19–26 are G1; it reads GHVDHGKT. A GTP-binding site is contributed by 19–26; it reads GHVDHGKT. Thr-26 is a Mg(2+) binding site. A G2 region spans residues 60–64; sequence GITIN. The G3 stretch occupies residues 81 to 84; the sequence is DCPG. GTP is bound by residues 81–85 and 136–139; these read DCPGH and NKCD. Residues 136 to 139 form a G4 region; that stretch reads NKCD. The interval 174–176 is G5; it reads SAL.

It belongs to the TRAFAC class translation factor GTPase superfamily. Classic translation factor GTPase family. EF-Tu/EF-1A subfamily. As to quaternary structure, monomer.

It localises to the cytoplasm. It catalyses the reaction GTP + H2O = GDP + phosphate + H(+). In terms of biological role, GTP hydrolase that promotes the GTP-dependent binding of aminoacyl-tRNA to the A-site of ribosomes during protein biosynthesis. In Yersinia pseudotuberculosis serotype O:1b (strain IP 31758), this protein is Elongation factor Tu 2.